The sequence spans 792 residues: Phosphoenolpyruvate synthase (792 aa).

Catalysis depends on histidine 421, which acts as the Tele-phosphohistidine intermediate. 7 residues coordinate substrate: arginine 511, arginine 578, glutamate 680, glycine 701, serine 702, asparagine 703, and aspartate 704. Glutamate 680 is a Mg(2+) binding site. Position 704 (aspartate 704) interacts with Mg(2+). Cysteine 751 (proton donor) is an active-site residue.

It belongs to the PEP-utilizing enzyme family. As to quaternary structure, homodimer. Requires Mg(2+) as cofactor.

The catalysed reaction is pyruvate + ATP + H2O = phosphoenolpyruvate + AMP + phosphate + 2 H(+). Its pathway is carbohydrate biosynthesis; gluconeogenesis. With respect to regulation, activated by a Pi-dependent pyrophosphorylation and inactivated by an ADP-dependent phosphorylation on a regulatory threonine. Both reactions are mediated by the bifunctional serine/threonine kinase and phosphorylase PpsR. Functionally, catalyzes the phosphorylation of pyruvate to phosphoenolpyruvate. This is Phosphoenolpyruvate synthase (ppsA) from Escherichia coli (strain K12).